Reading from the N-terminus, the 265-residue chain is Indole-3-glycerol phosphate synthase (265 aa).

This sequence belongs to the TrpC family.

It catalyses the reaction 1-(2-carboxyphenylamino)-1-deoxy-D-ribulose 5-phosphate + H(+) = (1S,2R)-1-C-(indol-3-yl)glycerol 3-phosphate + CO2 + H2O. The protein operates within amino-acid biosynthesis; L-tryptophan biosynthesis; L-tryptophan from chorismate: step 4/5. The chain is Indole-3-glycerol phosphate synthase from Xanthomonas campestris pv. campestris (strain 8004).